Here is a 476-residue protein sequence, read N- to C-terminus: Cytochrome c oxidase subunit 1 (476 aa).

Residues 19-39 (LYYLWFSFLFGTYGFLLSVIL) traverse the membrane as a helical segment. E42 provides a ligand contact to Ca(2+). A run of 8 helical transmembrane segments spans residues 61 to 81 (MIFT…GLFG), 105 to 125 (ISLL…AAEF), 144 to 164 (LSPV…IASI), 194 to 214 (IIIT…GVLM), 240 to 260 (LFWF…FGVI), 278 to 298 (MILA…HHMY), 309 to 329 (FFTS…FNWL), and 345 to 365 (LLCL…VILG). Residue H66 participates in Fe(II)-heme a binding. H246 is a Cu cation binding site. Positions 246–250 (HPEVY) form a cross-link, 1'-histidyl-3'-tyrosine (His-Tyr). Residue Y250 coordinates O2. H295 and H296 together coordinate Cu cation. Mg(2+)-binding residues include H374 and D375. Transmembrane regions (helical) follow at residues 379-399 (VIAH…FTCV) and 415-435 (TLIV…FLPM). H382 serves as a coordination point for heme a3. H384 contributes to the Fe(II)-heme a binding site. P448 serves as a coordination point for Ca(2+). The chain crosses the membrane as a helical span at residues 455 to 475 (NGWNMICSIGSTMTLFGLLIF).

The protein belongs to the heme-copper respiratory oxidase family. Component of the cytochrome c oxidase (complex IV, CIV), a multisubunit enzyme composed of a catalytic core of 3 subunits and several supernumerary subunits. The complex exists as a monomer or a dimer and forms supercomplexes (SCs) in the inner mitochondrial membrane with ubiquinol-cytochrome c oxidoreductase (cytochrome b-c1 complex, complex III, CIII). Requires heme as cofactor. Cu cation serves as cofactor.

The protein localises to the mitochondrion inner membrane. The enzyme catalyses 4 Fe(II)-[cytochrome c] + O2 + 8 H(+)(in) = 4 Fe(III)-[cytochrome c] + 2 H2O + 4 H(+)(out). It functions in the pathway energy metabolism; oxidative phosphorylation. Component of the cytochrome c oxidase, the last enzyme in the mitochondrial electron transport chain which drives oxidative phosphorylation. The respiratory chain contains 3 multisubunit complexes succinate dehydrogenase (complex II, CII), ubiquinol-cytochrome c oxidoreductase (cytochrome b-c1 complex, complex III, CIII) and cytochrome c oxidase (complex IV, CIV), that cooperate to transfer electrons derived from NADH and succinate to molecular oxygen, creating an electrochemical gradient over the inner membrane that drives transmembrane transport and the ATP synthase. Cytochrome c oxidase is the component of the respiratory chain that catalyzes the reduction of oxygen to water. Electrons originating from reduced cytochrome c in the intermembrane space (IMS) are transferred via the dinuclear copper A center (CU(A)) of subunit 2 and heme A of subunit 1 to the active site in subunit 1, a binuclear center (BNC) formed by heme A3 and copper B (CU(B)). The BNC reduces molecular oxygen to 2 water molecules using 4 electrons from cytochrome c in the IMS and 4 protons from the mitochondrial matrix. The polypeptide is Cytochrome c oxidase subunit 1 (COI) (Plasmodium berghei).